The chain runs to 348 residues: Xaa-Pro dipeptidase (348 aa).

The Co(2+) site is built by Asp-209, Asp-220, His-284, Glu-313, and Glu-327.

The protein belongs to the peptidase M24B family. Archaeal-type prolidase subfamily. As to quaternary structure, homodimer. Requires Co(2+) as cofactor. It depends on Mn(2+) as a cofactor.

Its subcellular location is the cytoplasm. The catalysed reaction is Xaa-L-Pro dipeptide + H2O = an L-alpha-amino acid + L-proline. Functionally, splits dipeptides with a prolyl in the C-terminal position and a nonpolar amino acid at the N-terminal position. In Pyrococcus furiosus (strain ATCC 43587 / DSM 3638 / JCM 8422 / Vc1), this protein is Xaa-Pro dipeptidase (pepQ).